Consider the following 354-residue polypeptide: UPF0283 membrane protein Meso_1416 (354 aa).

The tract at residues 1–28 (MSEPRRPAAFRIEPAPSPSPEATREDVR) is disordered. A run of 2 helical transmembrane segments spans residues 71–91 (LGAVFVAALGMLVSLAAGLWA) and 105–125 (LGWLGAALVAVAALALFAIVV).

The protein belongs to the UPF0283 family.

It is found in the cell inner membrane. This Chelativorans sp. (strain BNC1) protein is UPF0283 membrane protein Meso_1416.